A 716-amino-acid chain; its full sequence is Macrophage-expressed gene 1 protein (716 aa).

The signal sequence occupies residues 1-20; sequence MNNFRATILFWAVAAWVTSG. Positions 30-345 constitute an MACPF domain; the sequence is GVQKCKNALK…TAVKRYYTFN (316 aa). Cys-34 and Cys-70 are oxidised to a cystine. 2 consecutive transmembrane segments (beta stranded) span residues 113 to 120 and 127 to 132; these read YSINTELS and GKFSTE. N-linked (GlcNAc...) asparagine glycans are attached at residues Asn-168 and Asn-185. Beta stranded transmembrane passes span 235–244 and 248–256; these read AVTASAGLAF and VNFKFEENY. Asn-269 carries an N-linked (GlcNAc...) asparagine glycan. Cys-350 and Cys-369 form a disulfide bridge. The N-linked (GlcNAc...) asparagine glycan is linked to Asn-375. Disulfide bonds link Cys-385–Cys-397, Cys-435–Cys-449, Cys-439–Cys-445, Cys-534–Cys-572, and Cys-557–Cys-577. Residues 413–656 are P2; sequence PSGYSPVRLL…GDGGGLSGGA (244 aa). A helical membrane pass occupies residues 656–676; it reads AAAGVTLGVTTILAVVITLAI. A disordered region spans residues 693 to 716; it reads RQSLVPGTAATGDTTYQEQGQSPA. Residues 703–716 show a composition bias toward polar residues; it reads TGDTTYQEQGQSPA.

The protein belongs to the MPEG1 family. As to quaternary structure, homooligomer; predominantly forms a homooligomeric arc-shaped pore complex instead of complete rings of 16 subunits. In terms of processing, proteolytically processed in two steps to generate the Macrophage-expressed gene 1 protein, processed form: cleaved by trypsin in proximity of the helical transmembrane domain releases the ectodomain into the lysosomal lumen to orient the pore-forming domain toward the endogenous membranes, and processed by the asparagine endopeptidase (LGMN). Proteolytic processing in antigen-containing vesicles is pH-dependent. Post-translationally, monoubiquitinated in response to bacterial infection; ubiquitination is required for vesicular localization and antibacterial activity and can be blocked by bacterial cell cycle inhibiting factor (cif).

It localises to the cytoplasmic vesicle membrane. Its subcellular location is the cytoplasmic vesicle. It is found in the phagosome membrane. Forms arc- and ring-shaped pre-pores on top of the membrane at neutral to slightly acidic pH conditions and converts to pores upon acidification. Undergoes transition from the pre-pore to the pore in a processive clockwise hand-over-hand process. In the pore state, 2 alpha-helical regions refold into transmembrane hairpins (TMH1 and TMH2) in each protomer that form in the ensemble complex giant beta-barrel transmembrane pores. In terms of biological role, pore-forming protein involved in both innate and adaptive immunity. Plays a central role in antigen cross-presentation in dendritic cells by forming a pore in antigen-containing compartments, thereby promoting delivery of antigens for cross-presentation. Also involved in innate immune response following bacterial infection; shows antibacterial activity against a wide spectrum of Gram-positive, Gram-negative and acid-fast bacteria. Reduces the viability of the intracytosolic pathogen L.monocytogenes by inhibiting acidification of the phagocytic vacuole of host cells which restricts bacterial translocation from the vacuole to the cytosol. Required for the antibacterial activity of reactive oxygen species and nitric oxide. Functionally, pore-forming protein that plays a central role in antigen cross-presentation in dendritic cells by mediating delivery of antigens for cross-presentation. Dendritic cells bridge innate and adaptive immunity by capturing exogenous antigens on MHC class-I molecules and presenting them to naive CD8(+) T-cells. Acts by forming a pore in antigen-containing compartments, promoting the release of antigens into the cytosol, enabling generation of MHCI:peptide complexes and T-cell priming. This Pongo abelii (Sumatran orangutan) protein is Macrophage-expressed gene 1 protein (MPEG1).